The following is a 740-amino-acid chain: Dipeptidyl peptidase family member 6 (740 aa).

A topological domain (cytoplasmic) is located at residue Met-1. The chain crosses the membrane as a helical; Signal-anchor for type II membrane protein span at residues 2–22 (LFLPILILNLLIITHAIDIIP). At 23–740 (REVLFQDPKY…VMNRIFPVQG (718 aa)) the chain is on the lumenal side. N-linked (GlcNAc...) asparagine glycans are attached at residues Asn-108, Asn-308, and Asn-506. Active-site charge relay system residues include Ser-516, Asp-604, and His-636. Residues Cys-535 and Cys-658 are joined by a disulfide bond. A glycan (N-linked (GlcNAc...) asparagine) is linked at Asn-672.

The protein belongs to the peptidase S9B family. DPPIV subfamily.

It is found in the cell membrane. In terms of biological role, removes N-terminal dipeptides sequentially from polypeptides. Essential for control of distal tip cell migration. In Caenorhabditis elegans, this protein is Dipeptidyl peptidase family member 6 (dpf-6).